The sequence spans 186 residues: ATP synthase subunit delta, cyanelle (186 aa).

Belongs to the ATPase delta chain family. In terms of assembly, F-type ATPases have 2 components, F(1) - the catalytic core - and F(0) - the membrane proton channel. F(1) has five subunits: alpha(3), beta(3), gamma(1), delta(1), epsilon(1). CF(0) has four main subunits: a(1), b(1), b'(1) and c(10-14). The alpha and beta chains form an alternating ring which encloses part of the gamma chain. F(1) is attached to F(0) by a central stalk formed by the gamma and epsilon chains, while a peripheral stalk is formed by the delta, b and b' chains.

It localises to the plastid. Its subcellular location is the cyanelle thylakoid membrane. Its function is as follows. F(1)F(0) ATP synthase produces ATP from ADP in the presence of a proton or sodium gradient. F-type ATPases consist of two structural domains, F(1) containing the extramembraneous catalytic core and F(0) containing the membrane proton channel, linked together by a central stalk and a peripheral stalk. During catalysis, ATP synthesis in the catalytic domain of F(1) is coupled via a rotary mechanism of the central stalk subunits to proton translocation. Functionally, this protein is part of the stalk that links CF(0) to CF(1). It either transmits conformational changes from CF(0) to CF(1) or is implicated in proton conduction. This is ATP synthase subunit delta, cyanelle from Cyanophora paradoxa.